The chain runs to 477 residues: Glycogen synthase (477 aa).

K15 lines the ADP-alpha-D-glucose pocket.

Belongs to the glycosyltransferase 1 family. Bacterial/plant glycogen synthase subfamily.

The enzyme catalyses [(1-&gt;4)-alpha-D-glucosyl](n) + ADP-alpha-D-glucose = [(1-&gt;4)-alpha-D-glucosyl](n+1) + ADP + H(+). It participates in glycan biosynthesis; glycogen biosynthesis. Its function is as follows. Synthesizes alpha-1,4-glucan chains using ADP-glucose. This Glaesserella parasuis serovar 5 (strain SH0165) (Haemophilus parasuis) protein is Glycogen synthase.